A 158-amino-acid polypeptide reads, in one-letter code: 6,7-dimethyl-8-ribityllumazine synthase (158 aa).

5-amino-6-(D-ribitylamino)uracil-binding positions include F22, A57–E59, and A81–I83. G86–T87 is a binding site for (2S)-2-hydroxy-3-oxobutyl phosphate. The active-site Proton donor is the H89. F114 is a binding site for 5-amino-6-(D-ribitylamino)uracil. Residue R128 coordinates (2S)-2-hydroxy-3-oxobutyl phosphate.

This sequence belongs to the DMRL synthase family. As to quaternary structure, forms an icosahedral capsid composed of 60 subunits, arranged as a dodecamer of pentamers.

It catalyses the reaction (2S)-2-hydroxy-3-oxobutyl phosphate + 5-amino-6-(D-ribitylamino)uracil = 6,7-dimethyl-8-(1-D-ribityl)lumazine + phosphate + 2 H2O + H(+). It participates in cofactor biosynthesis; riboflavin biosynthesis; riboflavin from 2-hydroxy-3-oxobutyl phosphate and 5-amino-6-(D-ribitylamino)uracil: step 1/2. Its function is as follows. Catalyzes the formation of 6,7-dimethyl-8-ribityllumazine by condensation of 5-amino-6-(D-ribitylamino)uracil with 3,4-dihydroxy-2-butanone 4-phosphate. This is the penultimate step in the biosynthesis of riboflavin. The polypeptide is 6,7-dimethyl-8-ribityllumazine synthase (Shewanella piezotolerans (strain WP3 / JCM 13877)).